Reading from the N-terminus, the 313-residue chain is Aspartate carbamoyltransferase catalytic subunit (313 aa).

Residues arginine 61 and threonine 62 each coordinate carbamoyl phosphate. Lysine 89 serves as a coordination point for L-aspartate. Arginine 111, histidine 139, and glutamine 142 together coordinate carbamoyl phosphate. Arginine 172 and arginine 227 together coordinate L-aspartate. Residues glycine 268 and proline 269 each coordinate carbamoyl phosphate.

The protein belongs to the aspartate/ornithine carbamoyltransferase superfamily. ATCase family. As to quaternary structure, heterododecamer (2C3:3R2) of six catalytic PyrB chains organized as two trimers (C3), and six regulatory PyrI chains organized as three dimers (R2).

It carries out the reaction carbamoyl phosphate + L-aspartate = N-carbamoyl-L-aspartate + phosphate + H(+). Its pathway is pyrimidine metabolism; UMP biosynthesis via de novo pathway; (S)-dihydroorotate from bicarbonate: step 2/3. In terms of biological role, catalyzes the condensation of carbamoyl phosphate and aspartate to form carbamoyl aspartate and inorganic phosphate, the committed step in the de novo pyrimidine nucleotide biosynthesis pathway. The protein is Aspartate carbamoyltransferase catalytic subunit of Gluconobacter oxydans (strain 621H) (Gluconobacter suboxydans).